The sequence spans 463 residues: Putative pentatricopeptide repeat-containing protein At4g17915 (463 aa).

12 PPR repeats span residues 12-46, 47-81, 82-116, 117-152, 153-186, 187-221, 222-256, 257-291, 292-326, 327-361, 362-392, and 393-427; these read STRL…GVDP, DVVT…GIRP, DVAT…GIYP, DLWS…GLNP, GPDT…RFKP, ELMT…GYTP, NAVT…GYTY, DGYA…GRRH, DIVS…GMKA, DEYT…GIGL, NLVT…MEVK, and DEYT…GIKI.

The protein belongs to the PPR family. P subfamily.

This is Putative pentatricopeptide repeat-containing protein At4g17915 from Arabidopsis thaliana (Mouse-ear cress).